Consider the following 101-residue polypeptide: Protein Tat (101 aa).

The segment at 1–20 (MDPVDPNIEPWNQPGSQPKT) is disordered. Residues 1–24 (MDPVDPNIEPWNQPGSQPKTACNQ) form an interaction with human CREBBP region. Residues 1 to 48 (MDPVDPNIEPWNQPGSQPKTACNQCYCKRCCYHCQICFLKKGLGISNG) are transactivation. Positions 22, 25, and 27 each coordinate Zn(2+). The interval 22–37 (CNQCYCKRCCYHCQIC) is cysteine-rich. At lysine 28 the chain carries N6-acetyllysine; by host PCAF. Positions 30, 33, 34, and 37 each coordinate Zn(2+). A core region spans residues 38-48 (FLKKGLGISNG). A disordered region spans residues 45–101 (ISNGRKKRRPRRTTPYNSENHQDPLRKQPLSQPRGEQTDPKESKKKVESKTKTDQFD). The short motif at 49-57 (RKKRRPRRT) is the Nuclear localization signal, RNA-binding (TAR), and protein transduction element. Positions 49-86 (RKKRRPRRTTPYNSENHQDPLRKQPLSQPRGEQTDPKE) are interaction with the host capping enzyme RNGTT. N6-acetyllysine; by host EP300 and GCN5L2 is present on residues lysine 50 and lysine 51. Asymmetric dimethylarginine; by host PRMT6 occurs at positions 52 and 53. Lysine 71 is covalently cross-linked (Glycyl lysine isopeptide (Lys-Gly) (interchain with G-Cter in ubiquitin)). The span at 80 to 101 (EQTDPKESKKKVESKTKTDQFD) shows a compositional bias: basic and acidic residues.

It belongs to the lentiviruses Tat family. In terms of assembly, interacts with host CCNT1. Associates with the P-TEFb complex composed at least of Tat, P-TEFb (CDK9 and CCNT1), TAR RNA, RNA Pol II. Recruits the HATs CREBBP, TAF1/TFIID, EP300, PCAF and GCN5L2. Interacts with host KAT5/Tip60; this interaction targets the latter to degradation. Interacts with the host deacetylase SIRT1. Interacts with host capping enzyme RNGTT; this interaction stimulates RNGTT. Binds to host KDR, and to the host integrins ITGAV/ITGB3 and ITGA5/ITGB1. Interacts with host KPNB1/importin beta-1 without previous binding to KPNA1/importin alpha-1. Interacts with EIF2AK2. Interacts with host nucleosome assembly protein NAP1L1; this interaction may be required for the transport of Tat within the nucleus, since the two proteins interact at the nuclear rim. Interacts with host C1QBP/SF2P32; this interaction involves lysine-acetylated Tat. Interacts with the host chemokine receptors CCR2, CCR3 and CXCR4. Interacts with host DPP4/CD26; this interaction may trigger an anti-proliferative effect. Interacts with host LDLR. Interacts with the host extracellular matrix metalloproteinase MMP1. Interacts with host PRMT6; this interaction mediates Tat's methylation. Interacts with, and is ubiquitinated by MDM2/Hdm2. Interacts with host PSMC3 and HTATIP2. Interacts with STAB1; this interaction may overcome SATB1-mediated repression of IL2 and IL2RA (interleukin) in T cells by binding to the same domain than HDAC1. Interacts (when acetylated) with human CDK13, thereby increasing HIV-1 mRNA splicing and promoting the production of the doubly spliced HIV-1 protein Nef. Interacts with host TBP; this interaction modulates the activity of transcriptional pre-initiation complex. Interacts with host RELA. Interacts with host PLSCR1; this interaction negatively regulates Tat transactivation activity by altering its subcellular distribution. In terms of processing, asymmetrical arginine methylation by host PRMT6 seems to diminish the transactivation capacity of Tat and affects the interaction with host CCNT1. Post-translationally, acetylation by EP300, CREBBP, GCN5L2/GCN5 and PCAF regulates the transactivation activity of Tat. EP300-mediated acetylation of Lys-50 promotes dissociation of Tat from the TAR RNA through the competitive binding to PCAF's bromodomain. In addition, the non-acetylated Tat's N-terminus can also interact with PCAF. PCAF-mediated acetylation of Lys-28 enhances Tat's binding to CCNT1. Lys-50 is deacetylated by SIRT1. Polyubiquitination by host MDM2 does not target Tat to degradation, but activates its transactivation function and fosters interaction with CCNT1 and TAR RNA. In terms of processing, phosphorylated by EIF2AK2 on serine and threonine residues adjacent to the basic region important for TAR RNA binding and function. Phosphorylation of Tat by EIF2AK2 is dependent on the prior activation of EIF2AK2 by dsRNA.

The protein localises to the host nucleus. It is found in the host nucleolus. Its subcellular location is the host cytoplasm. It localises to the secreted. Its function is as follows. Transcriptional activator that increases RNA Pol II processivity, thereby increasing the level of full-length viral transcripts. Recognizes a hairpin structure at the 5'-LTR of the nascent viral mRNAs referred to as the transactivation responsive RNA element (TAR) and recruits the cyclin T1-CDK9 complex (P-TEFb complex) that will in turn hyperphosphorylate the RNA polymerase II to allow efficient elongation. The CDK9 component of P-TEFb and other Tat-activated kinases hyperphosphorylate the C-terminus of RNA Pol II that becomes stabilized and much more processive. Other factors such as HTATSF1/Tat-SF1, SUPT5H/SPT5, and HTATIP2 are also important for Tat's function. Besides its effect on RNA Pol II processivity, Tat induces chromatin remodeling of proviral genes by recruiting the histone acetyltransferases (HATs) CREBBP, EP300 and PCAF to the chromatin. This also contributes to the increase in proviral transcription rate, especially when the provirus integrates in transcriptionally silent region of the host genome. To ensure maximal activation of the LTR, Tat mediates nuclear translocation of NF-kappa-B by interacting with host RELA. Through its interaction with host TBP, Tat may also modulate transcription initiation. Tat can reactivate a latently infected cell by penetrating in it and transactivating its LTR promoter. In the cytoplasm, Tat is thought to act as a translational activator of HIV-1 mRNAs. Functionally, extracellular circulating Tat can be endocytosed by surrounding uninfected cells via the binding to several surface receptors such as CD26, CXCR4, heparan sulfate proteoglycans (HSPG) or LDLR. Neurons are rarely infected, but they internalize Tat via their LDLR. Through its interaction with nuclear HATs, Tat is potentially able to control the acetylation-dependent cellular gene expression. Modulates the expression of many cellular genes involved in cell survival, proliferation or in coding for cytokines or cytokine receptors. Tat plays a role in T-cell and neurons apoptosis. Tat induced neurotoxicity and apoptosis probably contribute to neuroAIDS. Circulating Tat also acts as a chemokine-like and/or growth factor-like molecule that binds to specific receptors on the surface of the cells, affecting many cellular pathways. In the vascular system, Tat binds to ITGAV/ITGB3 and ITGA5/ITGB1 integrins dimers at the surface of endothelial cells and competes with bFGF for heparin-binding sites, leading to an excess of soluble bFGF. The protein is Protein Tat of Homo sapiens (Human).